Consider the following 554-residue polypeptide: Pigment biosynthesis transcriptional activator pigB (554 aa).

A disordered region spans residues 1–21; it reads MFTSSSPEQRKPRQSRQLPGA. The segment at residues 23–40 is a DNA-binding region (zn(2)-C6 fungal-type); it reads CEECRRKKLRCDRQQPQC.

The protein localises to the nucleus. Functionally, transcription factor; part of the gene cluster that mediates the biosynthesis of azaphilone pigments (MonAzPs), a complex mixture of compounds with a common azaphilone skeleton very widely used as food colorants. Positively regulates the expression of the azaphilone pigments (MonAzPs) gene cluster. The protein is Pigment biosynthesis transcriptional activator pigB of Monascus ruber (Mold).